Here is a 990-residue protein sequence, read N- to C-terminus: Bifunctional glutamine synthetase adenylyltransferase/adenylyl-removing enzyme (990 aa).

The segment at M1–Q474 is adenylyl removase. The adenylyl transferase stretch occupies residues F484 to E990.

It belongs to the GlnE family. The cofactor is Mg(2+).

It carries out the reaction [glutamine synthetase]-O(4)-(5'-adenylyl)-L-tyrosine + phosphate = [glutamine synthetase]-L-tyrosine + ADP. The enzyme catalyses [glutamine synthetase]-L-tyrosine + ATP = [glutamine synthetase]-O(4)-(5'-adenylyl)-L-tyrosine + diphosphate. Involved in the regulation of glutamine synthetase GlnA, a key enzyme in the process to assimilate ammonia. When cellular nitrogen levels are high, the C-terminal adenylyl transferase (AT) inactivates GlnA by covalent transfer of an adenylyl group from ATP to specific tyrosine residue of GlnA, thus reducing its activity. Conversely, when nitrogen levels are low, the N-terminal adenylyl removase (AR) activates GlnA by removing the adenylyl group by phosphorolysis, increasing its activity. The regulatory region of GlnE binds the signal transduction protein PII (GlnB) which indicates the nitrogen status of the cell. This chain is Bifunctional glutamine synthetase adenylyltransferase/adenylyl-removing enzyme, found in Alteromonas mediterranea (strain DSM 17117 / CIP 110805 / LMG 28347 / Deep ecotype).